A 215-amino-acid chain; its full sequence is Protein ERP2 (215 aa).

The signal sequence occupies residues 1-25 (MIKSTIALPSFFIVLILALVNSVAA). The Lumenal portion of the chain corresponds to 26 to 182 (SSSYAPVAIS…TVNSTESRLT (157 aa)). Positions 41 to 123 (KECLYYDMVT…LKKVEITLEK (83 aa)) constitute a GOLD domain. The chain crosses the membrane as a helical span at residues 183-203 (WLSILIIIIIAVISIAQVLLI). Topologically, residues 204-215 (QFLFTGRQKNYV) are cytoplasmic.

It belongs to the EMP24/GP25L family. In terms of assembly, associates with EMP24, ERV25 and ERP1.

The protein resides in the endoplasmic reticulum membrane. Its function is as follows. Involved in vesicular protein trafficking. The chain is Protein ERP2 (ERP2) from Saccharomyces cerevisiae (strain ATCC 204508 / S288c) (Baker's yeast).